The chain runs to 424 residues: Anaerobic glycerol-3-phosphate dehydrogenase subunit B (424 aa).

This sequence belongs to the anaerobic G-3-P dehydrogenase subunit B family. Composed of a catalytic GlpA/B dimer and of membrane bound GlpC. FMN serves as cofactor.

It carries out the reaction a quinone + sn-glycerol 3-phosphate = dihydroxyacetone phosphate + a quinol. It functions in the pathway polyol metabolism; glycerol degradation via glycerol kinase pathway; glycerone phosphate from sn-glycerol 3-phosphate (anaerobic route): step 1/1. Conversion of glycerol 3-phosphate to dihydroxyacetone. Uses fumarate or nitrate as electron acceptor. This chain is Anaerobic glycerol-3-phosphate dehydrogenase subunit B, found in Yersinia enterocolitica serotype O:8 / biotype 1B (strain NCTC 13174 / 8081).